An 85-amino-acid chain; its full sequence is U4-theraphotoxin-Hhn1o (85 aa).

The N-terminal stretch at 1 to 22 is a signal peptide; the sequence is MKVTLIAILTCAAVLVLHTTAA. The propeptide occupies 23–48; the sequence is EELEAESQLMEVGMPDTELAAVDEER. Cystine bridges form between C52-C66, C56-C77, and C71-C82.

Belongs to the neurotoxin 12 (Hwtx-2) family. 02 (Hwtx-2) subfamily. As to expression, expressed by the venom gland.

Its subcellular location is the secreted. In terms of biological role, postsynaptic neurotoxin. The polypeptide is U4-theraphotoxin-Hhn1o (Cyriopagopus hainanus (Chinese bird spider)).